Here is a 296-residue protein sequence, read N- to C-terminus: 2-haloacid dehalogenase, configuration-inverting (296 aa).

Belongs to the HAD-like hydrolase superfamily. S-2-haloalkanoic acid dehalogenase family.

It catalyses the reaction an (S)-2-haloacid + H2O = a (2R)-2-hydroxycarboxylate + a halide anion + H(+). The catalysed reaction is an (R)-2-haloacid + H2O = a (2S)-2-hydroxycarboxylate + a halide anion + H(+). Functionally, dehalogenates both (S)- and (R)-2-haloalkanoic acids to the corresponding (R)- and (S)-hydroxyalkanoic acids, respectively, with inversion of configuration at C-2. Acts on 2-haloalkanoic acids whose carbon chain lengths are five or less. This chain is 2-haloacid dehalogenase, configuration-inverting (dhlC), found in Alcaligenes xylosoxydans xylosoxydans (Achromobacter xylosoxidans).